The primary structure comprises 406 residues: Solute carrier family 22 member 18 (406 aa).

10 helical membrane passes run glycine 8–phenylalanine 28, valine 43–phenylalanine 63, alanine 85–phenylalanine 105, leucine 140–threonine 160, alanine 168–alanine 188, phenylalanine 226–isoleucine 246, alanine 258–glycine 278, leucine 295–phenylalanine 315, leucine 316–threonine 336, and glycine 374–tryptophan 394.

Belongs to the major facilitator (TC 2.A.1) superfamily. Organic cation transporter (TC 2.A.1.19) family. Interacts with RNF167. As to expression, expressed at high levels in fetal and adult kidney and liver, and extraembryonic membranes (yolk sac). Expressed at moderate levels in intestine, heart, lung and testis.

It is found in the apical cell membrane. Functionally, may act as a transporter of organic cations based on a proton efflux antiport mechanism. May play a role in the transport of chloroquine and quinidine-related compounds in kidney. Plays a role in the regulation of lipid metabolism. This chain is Solute carrier family 22 member 18 (Slc67a1), found in Mus musculus (Mouse).